The sequence spans 261 residues: Carbonic anhydrase 1 (261 aa).

Positions 1–31 are disordered; that stretch reads MASPDWGYDDKNGPEQWSKLYPIANGNNQSP. Residue Ala2 is modified to N-acetylalanine. Residues 4–261 enclose the Alpha-carbonic anhydrase domain; the sequence is PDWGYDDKNG…LKGRTVRASF (258 aa). The Proton donor/acceptor role is filled by His65. 3 residues coordinate Zn(2+): His95, His97, and His120. Substrate is bound by residues Thr200 and 200–201; that span reads TH. Residues 240–261 are disordered; sequence VPMQHNNRPTQPLKGRTVRASF.

Belongs to the alpha-carbonic anhydrase family. Zn(2+) serves as cofactor.

The protein localises to the cytoplasm. The enzyme catalyses hydrogencarbonate + H(+) = CO2 + H2O. It carries out the reaction urea = cyanamide + H2O. Inhibited by acetazolamide. Catalyzes the reversible hydration of carbon dioxide. Can hydrate cyanamide to urea. The chain is Carbonic anhydrase 1 (CA1) from Gorilla gorilla gorilla (Western lowland gorilla).